The primary structure comprises 558 residues: Energy-dependent translational throttle protein EttA (558 aa).

ABC transporter domains lie at 6–256 (YTMK…AVQG) and 322–552 (VEVD…RVTH). 38–45 (GPNGAGKS) contributes to the ATP binding site. The interval 94 to 136 (GDIKIKLDRFNEVAELMATDYTDELMEEMGRLQEELDHADAWD) is arm. The segment at 239–320 (GNYSTYLEKK…IPVGPRLGNV (82 aa)) is ptIM. 354-361 (GPNGVGKT) serves as a coordination point for ATP.

This sequence belongs to the ABC transporter superfamily. ABCF family. Translational throttle EttA subfamily. Monomer. Probably contacts ribosomal proteins L1, L5, L33 and S7, the 16S and 23S rRNA and the P-site containing tRNA(fMet).

The protein resides in the cytoplasm. The catalysed reaction is ATP + H2O = ADP + phosphate + H(+). Functionally, a translation factor that gates the progression of the 70S ribosomal initiation complex (IC, containing tRNA(fMet) in the P-site) into the translation elongation cycle by using a mechanism sensitive to the ATP/ADP ratio. Binds to the 70S ribosome E-site where it modulates the state of the translating ribosome during subunit translocation. ATP hydrolysis probably frees it from the ribosome, which can enter the elongation phase. This chain is Energy-dependent translational throttle protein EttA, found in Mycobacterium tuberculosis (strain CDC 1551 / Oshkosh).